Reading from the N-terminus, the 446-residue chain is Glutamine synthetase (446 aa).

Positions 14–106 constitute a GS beta-grasp domain; it reads NNVKFIRFQF…VICDVYTTNG (93 aa). Positions 113–446 constitute a GS catalytic domain; it reads PRGCLKRVLA…DWETKQYLKI (334 aa). Mg(2+) contacts are provided by E137 and E139. ATP is bound at residue E187. 2 residues coordinate Mg(2+): E192 and E199. L-glutamate contacts are provided by residues 243 to 244 and G244; that span reads NG. H248 lines the Mg(2+) pocket. ATP contacts are provided by residues 250-252 and S252; that span reads HQS. R301, E307, and R319 together coordinate L-glutamate. Residues R319, R324, and K331 each contribute to the ATP site. E336 is a binding site for Mg(2+). R338 contacts L-glutamate.

This sequence belongs to the glutamine synthetase family. Oligomer of 12 subunits arranged in the form of two hexagons. Requires Mg(2+) as cofactor.

Its subcellular location is the cytoplasm. The enzyme catalyses L-glutamate + NH4(+) + ATP = L-glutamine + ADP + phosphate + H(+). Functionally, probably involved in nitrogen metabolism via ammonium assimilation. Catalyzes the ATP-dependent biosynthesis of glutamine from glutamate and ammonia. The sequence is that of Glutamine synthetase from Methanococcus maripaludis (strain DSM 14266 / JCM 13030 / NBRC 101832 / S2 / LL).